The sequence spans 624 residues: Probable potassium transport system protein Kup 1 (624 aa).

Helical transmembrane passes span 10-30 (LALG…LYAL), 48-68 (LSLI…MIIF), 94-114 (PLFY…GMLT), 133-153 (LYPY…SLQA), 159-179 (IGYL…ILGI), 210-230 (LLLG…ADIG), 242-262 (FFAA…NLIV), 270-290 (PFFM…ATVA), 331-351 (IYVP…CLAF), 363-383 (IAVN…AISI), 388-408 (IFNV…FLGA), and 413-433 (FITG…IMYS).

Belongs to the HAK/KUP transporter (TC 2.A.72) family.

Its subcellular location is the cell inner membrane. It carries out the reaction K(+)(in) + H(+)(in) = K(+)(out) + H(+)(out). Functionally, transport of potassium into the cell. Likely operates as a K(+):H(+) symporter. This is Probable potassium transport system protein Kup 1 from Legionella pneumophila (strain Lens).